An 851-amino-acid chain; its full sequence is DNA mismatch repair protein MutS (851 aa).

602–609 (GPNMSGKS) serves as a coordination point for ATP.

This sequence belongs to the DNA mismatch repair MutS family.

In terms of biological role, this protein is involved in the repair of mismatches in DNA. It is possible that it carries out the mismatch recognition step. This protein has a weak ATPase activity. This is DNA mismatch repair protein MutS from Streptococcus pyogenes serotype M49 (strain NZ131).